Here is a 390-residue protein sequence, read N- to C-terminus: Queuine tRNA-ribosyltransferase (390 aa).

The Proton acceptor role is filled by D92. Residues 92 to 96 (DSGGF), D146, Q195, and G222 contribute to the substrate site. An RNA binding region spans residues 253-259 (GVGTPED). D272 serves as the catalytic Nucleophile. The segment at 277–281 (TRNAR) is RNA binding; important for wobble base 34 recognition. Residues C310, C312, C315, and H354 each coordinate Zn(2+).

The protein belongs to the queuine tRNA-ribosyltransferase family. As to quaternary structure, homodimer. Within each dimer, one monomer is responsible for RNA recognition and catalysis, while the other monomer binds to the replacement base PreQ1. It depends on Zn(2+) as a cofactor.

The enzyme catalyses 7-aminomethyl-7-carbaguanine + guanosine(34) in tRNA = 7-aminomethyl-7-carbaguanosine(34) in tRNA + guanine. The protein operates within tRNA modification; tRNA-queuosine biosynthesis. Its function is as follows. Catalyzes the base-exchange of a guanine (G) residue with the queuine precursor 7-aminomethyl-7-deazaguanine (PreQ1) at position 34 (anticodon wobble position) in tRNAs with GU(N) anticodons (tRNA-Asp, -Asn, -His and -Tyr). Catalysis occurs through a double-displacement mechanism. The nucleophile active site attacks the C1' of nucleotide 34 to detach the guanine base from the RNA, forming a covalent enzyme-RNA intermediate. The proton acceptor active site deprotonates the incoming PreQ1, allowing a nucleophilic attack on the C1' of the ribose to form the product. After dissociation, two additional enzymatic reactions on the tRNA convert PreQ1 to queuine (Q), resulting in the hypermodified nucleoside queuosine (7-(((4,5-cis-dihydroxy-2-cyclopenten-1-yl)amino)methyl)-7-deazaguanosine). The polypeptide is Queuine tRNA-ribosyltransferase (Acidovorax ebreus (strain TPSY) (Diaphorobacter sp. (strain TPSY))).